The primary structure comprises 135 residues: Snaclec echicetin subunit alpha (135 aa).

A signal peptide spans 1-4; that stretch reads GADE. 3 cysteine pairs are disulfide-bonded: Cys6–Cys17, Cys34–Cys129, and Cys104–Cys121. Residues 13-130 enclose the C-type lectin domain; it reads NGVYCYMLFK…CENTFPFMCK (118 aa).

The protein belongs to the snaclec family. In terms of assembly, heterodimer of subunits alpha and beta; disulfide-linked. As to expression, expressed by the venom gland.

Its subcellular location is the secreted. Its function is as follows. Binding of echicetin to GPIbalpha (GP1BA) receptor on platelets alone results in inhibition of platelet aggregation, while binding to both GP1BA receptor and IgMk promotes platelet aggregation and signal transduction. This chain is Snaclec echicetin subunit alpha, found in Echis carinatus (Saw-scaled viper).